Here is a 338-residue protein sequence, read N- to C-terminus: Glycerol-3-phosphate dehydrogenase [NAD(P)+] (338 aa).

NADPH is bound by residues W12, H33, and K110. The sn-glycerol 3-phosphate site is built by K110, G142, and S144. A146 serves as a coordination point for NADPH. The sn-glycerol 3-phosphate site is built by K197, D250, S260, R261, and N262. K197 acts as the Proton acceptor in catalysis. Residue R261 participates in NADPH binding. The NADPH site is built by V286 and E288.

Belongs to the NAD-dependent glycerol-3-phosphate dehydrogenase family.

The protein localises to the cytoplasm. The catalysed reaction is sn-glycerol 3-phosphate + NAD(+) = dihydroxyacetone phosphate + NADH + H(+). It catalyses the reaction sn-glycerol 3-phosphate + NADP(+) = dihydroxyacetone phosphate + NADPH + H(+). It participates in membrane lipid metabolism; glycerophospholipid metabolism. Catalyzes the reduction of the glycolytic intermediate dihydroxyacetone phosphate (DHAP) to sn-glycerol 3-phosphate (G3P), the key precursor for phospholipid synthesis. The protein is Glycerol-3-phosphate dehydrogenase [NAD(P)+] of Acidobacterium capsulatum (strain ATCC 51196 / DSM 11244 / BCRC 80197 / JCM 7670 / NBRC 15755 / NCIMB 13165 / 161).